We begin with the raw amino-acid sequence, 245 residues long: Ribonuclease 3 (245 aa).

The region spanning 17–146 (FTDKMKSLGL…FVGALYLDQG (130 aa)) is the RNase III domain. Glu59 contacts Mg(2+). Asp63 is an active-site residue. Positions 132 and 135 each coordinate Mg(2+). Glu135 is a catalytic residue. One can recognise a DRBM domain in the interval 172-241 (DFKTQFQEYV…AEQAYKLMKN (70 aa)).

Belongs to the ribonuclease III family. As to quaternary structure, homodimer. Requires Mg(2+) as cofactor.

The protein localises to the cytoplasm. It carries out the reaction Endonucleolytic cleavage to 5'-phosphomonoester.. Functionally, digests double-stranded RNA. Involved in the processing of primary rRNA transcript to yield the immediate precursors to the large and small rRNAs (23S and 16S). Processes some mRNAs, and tRNAs when they are encoded in the rRNA operon. Processes pre-crRNA and tracrRNA of type II CRISPR loci if present in the organism. The protein is Ribonuclease 3 of Staphylococcus epidermidis (strain ATCC 12228 / FDA PCI 1200).